Reading from the N-terminus, the 247-residue chain is O-methyltransferase imqG (247 aa).

Residues E84, 86 to 87 (GT), and A138 contribute to the S-adenosyl-L-methionine site. Residues D163, D189, and N190 each contribute to the a divalent metal cation site. D163 provides a ligand contact to substrate.

It belongs to the class I-like SAM-binding methyltransferase superfamily. Cation-dependent O-methyltransferase family. CCoAMT subfamily. Homodimer. A divalent metal cation serves as cofactor.

Its pathway is secondary metabolite biosynthesis. Its function is as follows. O-methyltransferase; part of the gene cluster that mediates the biosynthesis of imizoquins A to D, tripeptide-derived alkaloids that serve a protective role against oxidative stress that are essential for normal germination. ImqB is a canonical three-module NRPS that assembles the tripeptide backbone of the imizoquins via condensation of Trp, Tyr, and Leu-derived precursors. N-methylation by imqF and phenol oxidation by imqC, followed by cyclization via the FAD-dependent oxidase imqH carry out the three-step transformation of L-tyrosine into tetrahydroisoquinoline. Importantly, this sequence requires the presence of a free amine in the tyrosine moiety, indicating that isoquinoline formation occurs prior to peptide bond formation. The imidazolidin-4-one ring of imizoquins could form following additional oxidation of the methyl-derived bridgehead carbon by imqH. Lastly, O-methylation by imqG and leucine hydroxylation by imqE complete biosynthesis of the imizoquins. This is O-methyltransferase imqG from Aspergillus flavus (strain ATCC 200026 / FGSC A1120 / IAM 13836 / NRRL 3357 / JCM 12722 / SRRC 167).